The primary structure comprises 123 residues: uncharacterized protein (123 aa).

An N-terminal signal peptide occupies residues 1-20 (MARTLALRASAGLVAGMAMA).

This is an uncharacterized protein from Mycobacterium bovis (strain ATCC BAA-935 / AF2122/97).